A 184-amino-acid chain; its full sequence is Photosystem I assembly protein Ycf4 (184 aa).

A run of 2 helical transmembrane segments spans residues 22 to 42 (FFWACILFLGSLGFLVVGTSS) and 57 to 77 (ISFFPQGIVMSFYGIAGLFIS).

The protein belongs to the Ycf4 family.

Its subcellular location is the plastid. It is found in the chloroplast thylakoid membrane. Its function is as follows. Seems to be required for the assembly of the photosystem I complex. In Lemna minor (Common duckweed), this protein is Photosystem I assembly protein Ycf4.